Consider the following 138-residue polypeptide: Large ribosomal subunit protein bL19 (138 aa).

Belongs to the bacterial ribosomal protein bL19 family.

In terms of biological role, this protein is located at the 30S-50S ribosomal subunit interface and may play a role in the structure and function of the aminoacyl-tRNA binding site. In Rickettsia felis (strain ATCC VR-1525 / URRWXCal2) (Rickettsia azadi), this protein is Large ribosomal subunit protein bL19.